The sequence spans 83 residues: Cardiotoxin 7'' (83 aa).

Positions 1–21 (MKTLLLTLVVVTIVCLDLGYT) are cleaved as a signal peptide. 4 cysteine pairs are disulfide-bonded: cysteine 24–cysteine 43, cysteine 36–cysteine 61, cysteine 65–cysteine 76, and cysteine 77–cysteine 82.

It belongs to the three-finger toxin family. Short-chain subfamily. Orphan group XV sub-subfamily. As to expression, expressed by the venom gland.

Its subcellular location is the secreted. It localises to the target cell membrane. Has low cytotoxic activity. The sequence is that of Cardiotoxin 7'' from Naja atra (Chinese cobra).